The primary structure comprises 166 residues: Urease accessory protein UreE 2 (166 aa).

The segment at 133–156 is disordered; the sequence is QPEHGAYGGGHHHSRAGEEDFNYP.

Belongs to the UreE family.

It is found in the cytoplasm. Its function is as follows. Involved in urease metallocenter assembly. Binds nickel. Probably functions as a nickel donor during metallocenter assembly. The sequence is that of Urease accessory protein UreE 2 from Pseudomonas syringae pv. tomato (strain ATCC BAA-871 / DC3000).